We begin with the raw amino-acid sequence, 474 residues long: tRNA-2-methylthio-N(6)-dimethylallyladenosine synthase (474 aa).

Residues 3–120 (KKLHIKTWGC…LPEMIEQVRR (118 aa)) enclose the MTTase N-terminal domain. [4Fe-4S] cluster is bound by residues Cys12, Cys49, Cys83, Cys157, Cys161, and Cys164. Residues 143-375 (RAEGPTAFVS…QDRITQQAMR (233 aa)) enclose the Radical SAM core domain. The region spanning 378–441 (RHMMGTVQRI…TNSLRGKFIR (64 aa)) is the TRAM domain.

This sequence belongs to the methylthiotransferase family. MiaB subfamily. In terms of assembly, monomer. [4Fe-4S] cluster serves as cofactor.

Its subcellular location is the cytoplasm. It catalyses the reaction N(6)-dimethylallyladenosine(37) in tRNA + (sulfur carrier)-SH + AH2 + 2 S-adenosyl-L-methionine = 2-methylsulfanyl-N(6)-dimethylallyladenosine(37) in tRNA + (sulfur carrier)-H + 5'-deoxyadenosine + L-methionine + A + S-adenosyl-L-homocysteine + 2 H(+). Functionally, catalyzes the methylthiolation of N6-(dimethylallyl)adenosine (i(6)A), leading to the formation of 2-methylthio-N6-(dimethylallyl)adenosine (ms(2)i(6)A) at position 37 in tRNAs that read codons beginning with uridine. The polypeptide is tRNA-2-methylthio-N(6)-dimethylallyladenosine synthase (Shewanella oneidensis (strain ATCC 700550 / JCM 31522 / CIP 106686 / LMG 19005 / NCIMB 14063 / MR-1)).